We begin with the raw amino-acid sequence, 159 residues long: MISEKLQNAINEQISAEMWSSNLYLSMSFYFEREGFSGFAHWMKKQSQEEMGHAYAMADYIIKRGGIAKVDKIDVVPTGWGTPLEVFEHVFEHERHVSKLVDALVDIAAAEKDKATQDFLWGFVREQVEEEATAQGIVDKIKRAGDAGIFFIDSQLGQR.

A Ferritin-like diiron domain is found at Met-1 to Gly-145. Fe cation-binding residues include Glu-17, Glu-50, His-53, Glu-94, and Gln-127.

The protein belongs to the ferritin family. Prokaryotic subfamily. In terms of assembly, homooligomer of 24 subunits that assemble into a spherical protein shell (12 +/- 1 nM diameter) that can sequester at least 2000 iron atoms.

It carries out the reaction 4 Fe(2+) + O2 + 6 H2O = 4 iron(III) oxide-hydroxide + 12 H(+). Functionally, may alleviate iron toxicity in the presence of oxygen. This Bacteroides fragilis (strain 638R) protein is Bacterial non-heme ferritin (ftnA).